A 328-amino-acid polypeptide reads, in one-letter code: Apoptosis facilitator Bcl-2-like protein 14 (328 aa).

S44 is subject to Phosphoserine. A BH3 motif is present at residues 213–227 (IVELLKFSGDQLGRE). The BH2 signature appears at 309–316 (WVQQNGGW).

Belongs to the Bcl-2 family. Phosphorylated by MELK, leading to inhibit its pro-apoptotic function.

It is found in the cytoplasm. Its function is as follows. Plays a role in apoptosis. This Mus musculus (Mouse) protein is Apoptosis facilitator Bcl-2-like protein 14 (Bcl2l14).